Reading from the N-terminus, the 283-residue chain is Pantothenate synthetase (283 aa).

30-37 (MGYYHSGH) is a binding site for ATP. Catalysis depends on His37, which acts as the Proton donor. Gln61 is a binding site for (R)-pantoate. Gln61 contributes to the beta-alanine binding site. Residue 147–150 (GQKD) participates in ATP binding. Gln153 contributes to the (R)-pantoate binding site. ATP contacts are provided by residues Val176 and 184 to 187 (MSSR).

Belongs to the pantothenate synthetase family. As to quaternary structure, homodimer.

The protein resides in the cytoplasm. It carries out the reaction (R)-pantoate + beta-alanine + ATP = (R)-pantothenate + AMP + diphosphate + H(+). It participates in cofactor biosynthesis; (R)-pantothenate biosynthesis; (R)-pantothenate from (R)-pantoate and beta-alanine: step 1/1. Functionally, catalyzes the condensation of pantoate with beta-alanine in an ATP-dependent reaction via a pantoyl-adenylate intermediate. The sequence is that of Pantothenate synthetase from Nitratidesulfovibrio vulgaris (strain DSM 19637 / Miyazaki F) (Desulfovibrio vulgaris).